Consider the following 580-residue polypeptide: Purine permease (580 aa).

A run of 12 helical transmembrane segments spans residues 68–88 (PLVL…AGVI), 107–127 (SQYL…VQMF), 136–156 (YYVG…ITVA), 184–204 (YGAL…LSFM), 211–231 (ALFP…SLIG), 263–283 (LPWG…TIIL), 294–314 (SCAV…CGYF), 385–405 (LGNG…MSVF), 426–446 (CCFF…LVAI), 447–467 (PSSV…ISGV), 481–501 (FILT…DWFS), and 522–542 (LVMA…NLIL).

The protein belongs to the nucleobase:cation symporter-2 (NCS2) (TC 2.A.40) family.

It is found in the membrane. Its function is as follows. Able to transport with low efficiency all natural purines as well as purine analogs. This is Purine permease (uapC) from Emericella nidulans (strain FGSC A4 / ATCC 38163 / CBS 112.46 / NRRL 194 / M139) (Aspergillus nidulans).